Reading from the N-terminus, the 363-residue chain is Glyceraldehyde-3-phosphate dehydrogenase, muscle (363 aa).

The tract at residues 1-176 (MVKVGVNGFG…KYDKSLKIVS (176 aa)) is interaction with WARS. At K3 the chain carries N6,N6-dimethyllysine. N7 is modified (deamidated asparagine). Residues 11–12 (RI) and D33 contribute to the NAD(+) site. Phosphotyrosine is present on Y70. The residue at position 89 (K89) is an N6-acetyllysine. At N92 the chain carries Deamidated asparagine. K94 carries the N6,N6-dimethyllysine modification. Position 98 is a deamidated asparagine (N98). A Phosphothreonine modification is found at T103. R108 and S150 together coordinate NAD(+). Phosphoserine occurs at positions 150 and 176. Position 177 is a deamidated asparagine (N177). S179 bears the Phosphoserine mark. 179 to 181 (SCT) provides a ligand contact to D-glyceraldehyde 3-phosphate. The active-site Nucleophile is the C180. Residue C180 is modified to ADP-ribosylcysteine; by autocatalysis; in irreversibly inhibited form. The residue at position 180 (C180) is a Cysteine persulfide. The residue at position 180 (C180) is an S-(2-succinyl)cysteine. Position 180 is an S-nitrosocysteine; in reversibly inhibited form (C180). T181 carries the post-translational modification Phosphothreonine. A Deamidated asparagine modification is found at N183. 3 positions are modified to phosphothreonine: T205, T210, and T212. Residue T210 participates in D-glyceraldehyde 3-phosphate binding. K214 participates in a covalent cross-link: Glycyl lysine isopeptide (Lys-Gly) (interchain with G-Cter in SUMO2). An N6,N6-dimethyllysine; alternate modification is found at K222. K222 carries the post-translational modification N6-acetyllysine; alternate. An N6-malonyllysine; alternate modification is found at K222. A Phosphothreonine modification is found at T239. 239-240 (TG) contacts D-glyceraldehyde 3-phosphate. K243 carries the post-translational modification N6,N6-dimethyllysine; alternate. An N6-malonyllysine; alternate modification is found at K243. Position 247 is an N6-acetyllysine (K247). Position 253 is a deamidated asparagine (N253). The residue at position 255 (K255) is an N6,N6-dimethyllysine; alternate. N6-acetyllysine; alternate is present on K255. T257 carries the post-translational modification Phosphothreonine. Residue R262 participates in D-glyceraldehyde 3-phosphate binding. T265 bears the Phosphothreonine mark. A Phosphoserine modification is found at S269. C275 is modified (S-(2-succinyl)cysteine). C275 bears the S-nitrosocysteine mark. K282 bears the N6-acetyllysine mark. The residue at position 291 (K291) is an N6,N6-dimethyllysine. The residue at position 340 (S340) is a Phosphoserine. N344 carries the deamidated asparagine modification. N344 is a binding site for NAD(+). At S361 the chain carries Phosphoserine. Position 362 is an N6,N6-dimethyllysine (K362).

This sequence belongs to the glyceraldehyde-3-phosphate dehydrogenase family. As to quaternary structure, homotetramer. Interacts with TPPP; the interaction is direct. Interacts (when S-nitrosylated) with SIAH1; leading to nuclear translocation. Interacts with RILPL1/GOSPEL, leading to prevent the interaction between GAPDH and SIAH1 and prevent nuclear translocation. Interacts with CHP1; the interaction increases the binding of CHP1 with microtubules. Associates with microtubules. Interacts with EIF1AD, USP25, PRKCI and WARS1. Interacts with phosphorylated RPL13A; inhibited by oxidatively-modified low-densitity lipoprotein (LDL(ox)). Component of the GAIT complex. Interacts with FKBP6; leading to inhibit GAPDH catalytic activity. Interacts with TRAF2, promoting TRAF2 ubiquitination. Interacts with TRAF3, promoting TRAF3 ubiquitination. ISGylated. In terms of processing, S-nitrosylation of Cys-180 leads to interaction with SIAH1, followed by translocation to the nucleus S-nitrosylation of Cys-275 is induced by interferon-gamma and LDL(ox) implicating the iNOS-S100A8/9 transnitrosylase complex and seems to prevent interaction with phosphorylated RPL13A and to interfere with GAIT complex activity. Post-translationally, sulfhydration at Cys-180 increases catalytic activity.

It localises to the cytoplasm. Its subcellular location is the cytosol. It is found in the cytoskeleton. The protein resides in the nucleus. The enzyme catalyses D-glyceraldehyde 3-phosphate + phosphate + NAD(+) = (2R)-3-phospho-glyceroyl phosphate + NADH + H(+). The catalysed reaction is S-nitroso-L-cysteinyl-[GAPDH] + L-cysteinyl-[protein] = L-cysteinyl-[GAPDH] + S-nitroso-L-cysteinyl-[protein]. The protein operates within carbohydrate degradation; glycolysis; pyruvate from D-glyceraldehyde 3-phosphate: step 1/5. Its activity is regulated as follows. Glyceraldehyde-3-phosphate dehydrogenase activity is inhibited by fumarate, via the formation of S-(2-succinyl)cysteine residues. Functionally, has both glyceraldehyde-3-phosphate dehydrogenase and nitrosylase activities, thereby playing a role in glycolysis and nuclear functions, respectively. Glyceraldehyde-3-phosphate dehydrogenase is a key enzyme in glycolysis that catalyzes the first step of the pathway by converting D-glyceraldehyde 3-phosphate (G3P) into 3-phospho-D-glyceroyl phosphate. Modulates the organization and assembly of the cytoskeleton. Facilitates the CHP1-dependent microtubule and membrane associations through its ability to stimulate the binding of CHP1 to microtubules. Component of the GAIT (gamma interferon-activated inhibitor of translation) complex which mediates interferon-gamma-induced transcript-selective translation inhibition in inflammation processes. Upon interferon-gamma treatment assembles into the GAIT complex which binds to stem loop-containing GAIT elements in the 3'-UTR of diverse inflammatory mRNAs (such as ceruplasmin) and suppresses their translation. Also plays a role in innate immunity by promoting TNF-induced NF-kappa-B activation and type I interferon production, via interaction with TRAF2 and TRAF3, respectively. Participates in nuclear events including transcription, RNA transport, DNA replication and apoptosis. Nuclear functions are probably due to the nitrosylase activity that mediates cysteine S-nitrosylation of nuclear target proteins such as SIRT1, HDAC2 and PRKDC. This is Glyceraldehyde-3-phosphate dehydrogenase, muscle from Jaculus orientalis (Greater Egyptian jerboa).